Consider the following 456-residue polypeptide: MEALGDLEGPRAPGGDDPAGSAGETPGWLSREQVFVLISAASVNLGSMMCYSILGPFFPKEAEKKGASNTIIGMIFGCFALFELLASLVFGNYLVHIGAKFMFVAGMFVSGGVTILFGVLDRVPDGPVFIAMCFLVRVMDAVSFAAAMTASSSILAKAFPNNVATVLGSLETFSGLGLILGPPVGGFLYQSFGYEVPFIVLGCVVLLMVPLNMYILPNYESDPGEHSFWKLIALPKVGLIAFVINSLSSCFGFLDPTLSLFVLEKFNLPAGYVGLVFLGMALSYAISSPLFGLLSDKRPPLRKWLLVFGNLITAGCYMLLGPVPILHIKSQLWLLVLILVVSGLSAGMSIIPTFPEILSCAHENGFEEGLSTLGLVSGLFSAMWSIGAFMGPTLGGFLYEKIGFEWAAAIQGLWALISGLAMGLFYLLEYSRRKRSKSQNILSTEEERTTLLPNET.

Position 1 is an N-acetylmethionine (Met1). Residues 1–24 (MEALGDLEGPRAPGGDDPAGSAGE) are disordered. Topologically, residues 1–33 (MEALGDLEGPRAPGGDDPAGSAGETPGWLSREQ) are cytoplasmic. Over residues 10–23 (PRAPGGDDPAGSAG) the composition is skewed to low complexity. Position 21 is a phosphoserine (Ser21). A helical transmembrane segment spans residues 34–54 (VFVLISAASVNLGSMMCYSIL). The Extracellular portion of the chain corresponds to 55-70 (GPFFPKEAEKKGASNT). The helical transmembrane segment at 71 to 91 (IIGMIFGCFALFELLASLVFG) threads the bilayer. Topologically, residues 92–100 (NYLVHIGAK) are cytoplasmic. The helical transmembrane segment at 101-121 (FMFVAGMFVSGGVTILFGVLD) threads the bilayer. At 122 to 127 (RVPDGP) the chain is on the extracellular side. Residues 128–148 (VFIAMCFLVRVMDAVSFAAAM) form a helical membrane-spanning segment. At 149–161 (TASSSILAKAFPN) the chain is on the cytoplasmic side. Residues 162-184 (NVATVLGSLETFSGLGLILGPPV) form a helical membrane-spanning segment. The Extracellular portion of the chain corresponds to 185-195 (GGFLYQSFGYE). A helical transmembrane segment spans residues 196 to 216 (VPFIVLGCVVLLMVPLNMYIL). Topologically, residues 217–230 (PNYESDPGEHSFWK) are cytoplasmic. The chain crosses the membrane as a helical span at residues 231–251 (LIALPKVGLIAFVINSLSSCF). At 252–272 (GFLDPTLSLFVLEKFNLPAGY) the chain is on the extracellular side. Residues 273–293 (VGLVFLGMALSYAISSPLFGL) traverse the membrane as a helical segment. Residues 294 to 304 (LSDKRPPLRKW) are Cytoplasmic-facing. A helical membrane pass occupies residues 305–325 (LLVFGNLITAGCYMLLGPVPI). The Extracellular portion of the chain corresponds to 326–331 (LHIKSQ). A helical transmembrane segment spans residues 332 to 352 (LWLLVLILVVSGLSAGMSIIP). Residues 353 to 377 (TFPEILSCAHENGFEEGLSTLGLVS) lie on the Cytoplasmic side of the membrane. A helical transmembrane segment spans residues 378-398 (GLFSAMWSIGAFMGPTLGGFL). The Extracellular portion of the chain corresponds to 399-407 (YEKIGFEWA). A helical transmembrane segment spans residues 408–428 (AAIQGLWALISGLAMGLFYLL). At 429-456 (EYSRRKRSKSQNILSTEEERTTLLPNET) the chain is on the cytoplasmic side. At Ser438 the chain carries Phosphoserine.

This sequence belongs to the major facilitator superfamily. Expressed in various tissues including lung, placenta, adrenal gland, liver, testis, and brain.

The protein localises to the cytoplasmic vesicle. Its subcellular location is the secretory vesicle membrane. The protein resides in the secretory vesicle. It localises to the synaptic vesicle membrane. It catalyses the reaction spermine(in) + n H(+)(out) = spermine(out) + n H(+)(in). The enzyme catalyses spermidine(in) + n H(+)(out) = spermidine(out) + n H(+)(in). It carries out the reaction serotonin(in) + n H(+)(out) = serotonin(out) + n H(+)(in). In terms of biological role, proton-coupled polyamine antiporter involved in the translocation of polyamines from cytosol into secretory vesicles prior to their release via exocytosis. Uses the electrochemical proton gradient generated by a V-type proton-pumping ATPase to couple the efflux of protons with the uptake of a polyamine molecule. Facilitates vesicular storage of spermine and spermidine in astrocytes with an impact on glutamatergic neuronal transmission and memory formation. Upon antigen stimulation, regulates polyamine accumulation and release in mast cell secretory granules, which in turn potentiates mast cell degranulation and histamine secretion. The chain is MFS-type transporter SLC18B1 from Homo sapiens (Human).